An 81-amino-acid polypeptide reads, in one-letter code: Photosystem I iron-sulfur center (81 aa).

4Fe-4S ferredoxin-type domains follow at residues 2–31 (SHAV…MVPW) and 39–68 (IASS…IRVY). Residues C11, C14, C17, C21, C48, C51, C54, and C58 each coordinate [4Fe-4S] cluster.

The cyanobacterial PSI reaction center is composed of one copy each of PsaA,B,C,D,E,F,I,J,K,L,M and X, and forms trimeric complexes. [4Fe-4S] cluster is required as a cofactor.

It localises to the cellular thylakoid membrane. It carries out the reaction reduced [plastocyanin] + hnu + oxidized [2Fe-2S]-[ferredoxin] = oxidized [plastocyanin] + reduced [2Fe-2S]-[ferredoxin]. Functionally, apoprotein for the two 4Fe-4S centers FA and FB of photosystem I (PSI); essential for photochemical activity. FB is the terminal electron acceptor of PSI, donating electrons to ferredoxin. The C-terminus interacts with PsaA/B/D and helps assemble the protein into the PSI complex. Required for binding of PsaD and PsaE to PSI. PSI is a plastocyanin/cytochrome c6-ferredoxin oxidoreductase, converting photonic excitation into a charge separation, which transfers an electron from the donor P700 chlorophyll pair to the spectroscopically characterized acceptors A0, A1, FX, FA and FB in turn. The sequence is that of Photosystem I iron-sulfur center from Prochlorococcus marinus (strain NATL2A).